We begin with the raw amino-acid sequence, 274 residues long: Large ribosomal subunit protein uL2 (274 aa).

Residues 224 to 274 (VAMNPVDHPHGGGEGRTSGGRHPVTPWGIPTKGYKTRRNKRSNKLIVQKRK) are disordered. Residues 257-274 (YKTRRNKRSNKLIVQKRK) show a composition bias toward basic residues.

The protein belongs to the universal ribosomal protein uL2 family. Part of the 50S ribosomal subunit. Forms a bridge to the 30S subunit in the 70S ribosome.

Its function is as follows. One of the primary rRNA binding proteins. Required for association of the 30S and 50S subunits to form the 70S ribosome, for tRNA binding and peptide bond formation. It has been suggested to have peptidyltransferase activity; this is somewhat controversial. Makes several contacts with the 16S rRNA in the 70S ribosome. The polypeptide is Large ribosomal subunit protein uL2 (Francisella tularensis subsp. mediasiatica (strain FSC147)).